We begin with the raw amino-acid sequence, 157 residues long: S-ribosylhomocysteine lyase (157 aa).

Fe cation-binding residues include His54, His58, and Cys126.

Belongs to the LuxS family. Homodimer. It depends on Fe cation as a cofactor.

The enzyme catalyses S-(5-deoxy-D-ribos-5-yl)-L-homocysteine = (S)-4,5-dihydroxypentane-2,3-dione + L-homocysteine. Functionally, involved in the synthesis of autoinducer 2 (AI-2) which is secreted by bacteria and is used to communicate both the cell density and the metabolic potential of the environment. The regulation of gene expression in response to changes in cell density is called quorum sensing. Catalyzes the transformation of S-ribosylhomocysteine (RHC) to homocysteine (HC) and 4,5-dihydroxy-2,3-pentadione (DPD). This is S-ribosylhomocysteine lyase from Bacillus licheniformis (strain ATCC 14580 / DSM 13 / JCM 2505 / CCUG 7422 / NBRC 12200 / NCIMB 9375 / NCTC 10341 / NRRL NRS-1264 / Gibson 46).